We begin with the raw amino-acid sequence, 130 residues long: Small ribosomal subunit protein uS9 (130 aa).

It belongs to the universal ribosomal protein uS9 family.

This is Small ribosomal subunit protein uS9 from Burkholderia multivorans (strain ATCC 17616 / 249).